Reading from the N-terminus, the 240-residue chain is Arginine transport ATP-binding protein ArtM (240 aa).

In terms of domain architecture, ABC transporter spans 2-236; that stretch reads IKVEKLSKSF…PKSKRAQDFL (235 aa). Position 34-41 (34-41) interacts with ATP; it reads GPSGSGKS.

It belongs to the ABC transporter superfamily.

It localises to the cell membrane. Its function is as follows. Part of a binding-protein-dependent transport system for arginine. Probably responsible for energy coupling to the transport system. The sequence is that of Arginine transport ATP-binding protein ArtM (artM) from Bacillus subtilis (strain 168).